The chain runs to 335 residues: MSKRVTSSKKSKIMREDSENDSAKNLSKTSKSVSKSKEAGSKRTKQNSSKSSKDLKTTKNIGGSKSSRTYNSEGSKNIKKTSSSKDSKVIKKNKQKVESSDSEKHSENKSHKKSSKSSSISRKKPIKKDTRKINIELVSDSDNNSDSELNGVDTTGDDIIYLKGEDNNDEKQNKKSPKKLLNEKKISSESFDDKLNELREELRENYIRQKKIMNDIKDLANLHKKDLRLAVKSGNRLNSGKHSGFNKPQTVPQSLKDLLKINDDVLSRSKVTELMYKYFTDNKMYNSKTKREIIPNSKIKKLFGMKEGDIITFYNMQTWLKKVYNENQNNEKLEE.

Residues 1–12 show a composition bias toward basic residues; it reads MSKRVTSSKKSK. Positions 1 to 182 are disordered; that stretch reads MSKRVTSSKK…NKKSPKKLLN (182 aa). A compositionally biased stretch (low complexity) spans 24–33; the sequence is KNLSKTSKSV. The segment covering 60-75 has biased composition (polar residues); the sequence is NIGGSKSSRTYNSEGS. The span at 83-109 shows a compositional bias: basic and acidic residues; it reads SSKDSKVIKKNKQKVESSDSEKHSENK. Over residues 110–126 the composition is skewed to basic residues; sequence SHKKSSKSSSISRKKPI. A compositionally biased stretch (basic and acidic residues) spans 163 to 173; that stretch reads KGEDNNDEKQN. The stretch at 181-217 forms a coiled coil; that stretch reads LNEKKISSESFDDKLNELREELRENYIRQKKIMNDIK. In terms of domain architecture, SWIB/MDM2 spans 244–326; it reads GFNKPQTVPQ…QTWLKKVYNE (83 aa).

This chain is Putative SWIB domain-containing protein R508, found in Acanthamoeba polyphaga mimivirus (APMV).